The chain runs to 263 residues: Acetylglutamate kinase (263 aa).

Residues 48-49, R70, and N162 each bind substrate; that span reads GG.

This sequence belongs to the acetylglutamate kinase family. ArgB subfamily.

Its subcellular location is the cytoplasm. The catalysed reaction is N-acetyl-L-glutamate + ATP = N-acetyl-L-glutamyl 5-phosphate + ADP. The protein operates within amino-acid biosynthesis; L-arginine biosynthesis; N(2)-acetyl-L-ornithine from L-glutamate: step 2/4. Functionally, catalyzes the ATP-dependent phosphorylation of N-acetyl-L-glutamate. This Vibrio campbellii (strain ATCC BAA-1116) protein is Acetylglutamate kinase.